The following is a 266-amino-acid chain: Eukaryotic translation initiation factor 3 subunit J (266 aa).

Disordered regions lie at residues 1-142 (MAPS…VSDS) and 215-243 (MSNE…VSLV). A compositionally biased stretch (acidic residues) spans 26-44 (DEEEEDVLDSWDAAEDSEV). The stretch at 40 to 99 (EDSEVEREKAAKAAEAKAKAEAEAAAKKKSKAQRIQEHKEERKKREEEDSSSESEEDEAE) forms a coiled coil. 2 stretches are compositionally biased toward basic and acidic residues: residues 45 to 65 (EREK…EAAA) and 73 to 86 (RIQE…KREE). Residues 87-97 (EDSSSESEEDE) are compositionally biased toward acidic residues. 2 stretches are compositionally biased toward basic and acidic residues: residues 98-118 (AERR…HAED) and 218-230 (EKMR…DKGN).

This sequence belongs to the eIF-3 subunit J family. In terms of assembly, component of the eukaryotic translation initiation factor 3 (eIF-3) complex.

It is found in the cytoplasm. Component of the eukaryotic translation initiation factor 3 (eIF-3) complex, which is involved in protein synthesis of a specialized repertoire of mRNAs and, together with other initiation factors, stimulates binding of mRNA and methionyl-tRNAi to the 40S ribosome. The eIF-3 complex specifically targets and initiates translation of a subset of mRNAs involved in cell proliferation. The sequence is that of Eukaryotic translation initiation factor 3 subunit J (hcr1) from Aspergillus terreus (strain NIH 2624 / FGSC A1156).